A 121-amino-acid chain; its full sequence is Flagellar hook-basal body complex protein FliE (121 aa).

This sequence belongs to the FliE family.

The protein resides in the bacterial flagellum basal body. The chain is Flagellar hook-basal body complex protein FliE from Saccharophagus degradans (strain 2-40 / ATCC 43961 / DSM 17024).